The following is a 1515-amino-acid chain: Adhesion G protein-coupled receptor L1 (1515 aa).

The signal sequence occupies residues methionine 1 to glycine 24. Residues leucine 25 to leucine 857 lie on the Extracellular side of the membrane. The SUEL-type lectin domain maps to alanine 40 to valine 129. Intrachain disulfides connect cysteine 41-cysteine 71, cysteine 50-cysteine 128, cysteine 83-cysteine 115, cysteine 96-cysteine 102, and cysteine 140-cysteine 322. Glutamate 42 is a binding site for alpha-L-rhamnose. The N-linked (GlcNAc...) asparagine glycan is linked to asparagine 98. Glycine 117 to lysine 120 is a binding site for alpha-L-rhamnose. One can recognise an Olfactomedin-like domain in the interval valine 139–proline 398. The tract at residues aspartate 400 to proline 468 is disordered. The segment covering proline 405 to threonine 441 has biased composition (low complexity). Residues aspartate 453–proline 468 show a composition bias toward pro residues. 2 disulfides stabilise this stretch: cysteine 480–cysteine 515 and cysteine 503–cysteine 532. 6 N-linked (GlcNAc...) asparagine glycosylation sites follow: asparagine 531, asparagine 640, asparagine 741, asparagine 800, asparagine 805, and asparagine 826. The 182-residue stretch at proline 669–tyrosine 850 folds into the GAIN-B domain. Disulfide bonds link cysteine 801-cysteine 832 and cysteine 820-cysteine 834. Positions cysteine 801–tyrosine 850 are GPS. The chain crosses the membrane as a helical span at residues leucine 858–isoleucine 878. Over serine 879 to asparagine 892 the chain is Cytoplasmic. A helical membrane pass occupies residues threonine 893–isoleucine 913. The Extracellular portion of the chain corresponds to aspartate 914 to glutamate 919. The chain crosses the membrane as a helical span at residues valine 920–leucine 940. Residues cysteine 941–tyrosine 964 lie on the Cytoplasmic side of the membrane. The helical transmembrane segment at tyrosine 965–tyrosine 985 threads the bilayer. At arginine 986–tyrosine 1001 the chain is on the extracellular side. A helical membrane pass occupies residues phenylalanine 1002 to methionine 1022. Residues valine 1023–alanine 1049 lie on the Cytoplasmic side of the membrane. Residues leucine 1050–isoleucine 1070 form a helical membrane-spanning segment. At asparagine 1071–serine 1074 the chain is on the extracellular side. The chain crosses the membrane as a helical span at residues valine 1075–phenylalanine 1095. The Cytoplasmic segment spans residues histidine 1096 to leucine 1515. Residues threonine 1144–threonine 1184 form a disordered region. Residue arginine 1237 is modified to Omega-N-methylarginine. Serine 1263 is modified (phosphoserine). Disordered regions lie at residues phenylalanine 1291–asparagine 1316, arginine 1337–alanine 1369, glutamate 1401–proline 1470, and tyrosine 1492–leucine 1515. Composition is skewed to pro residues over residues glycine 1345 to proline 1356 and alanine 1449 to proline 1461. Phosphoserine occurs at positions 1497 and 1514.

It belongs to the G-protein coupled receptor 2 family. Adhesion G-protein coupled receptor (ADGR) subfamily. In terms of assembly, forms a heterodimer, consisting of a large extracellular region (p120) non-covalently linked to a seven-transmembrane moiety (p85). Interacts with syntaxin and with proteins of the SHANK family via the PDZ domain. Isoform 2 interacts with TENM2. Interacts (via extracellular domain) with FLRT1, FLRT2 and FLRT3 (via extracellular domain). Post-translationally, autoproteolytically cleaved into 2 subunits, an extracellular subunit and a seven-transmembrane subunit. This proteolytic processing takes place early in the biosynthetic pathway, either in the endoplasmic reticulum or in the early compartment of the Golgi apparatus. As to expression, expressed in the brain (at protein level). Brain specific distribution but low levels are also detected in most tissues.

The protein localises to the cell membrane. The protein resides in the cell projection. Its subcellular location is the axon. It is found in the growth cone. It localises to the synapse. The protein localises to the presynaptic cell membrane. The protein resides in the synaptosome. Calcium-independent receptor of high affinity for alpha-latrotoxin, an excitatory neurotoxin present in black widow spider venom which triggers massive exocytosis from neurons and neuroendocrine cells. Receptor probably implicated in the regulation of exocytosis. In terms of biological role, receptor for TENM2 that mediates heterophilic synaptic cell-cell contact and postsynaptic specialization. The polypeptide is Adhesion G protein-coupled receptor L1 (Rattus norvegicus (Rat)).